A 320-amino-acid polypeptide reads, in one-letter code: Malate dehydrogenase (320 aa).

NAD(+) is bound by residues 10 to 15 (GAGQIG) and D34. The substrate site is built by R83 and R89. NAD(+)-binding positions include N96 and 119–121 (ITN). 2 residues coordinate substrate: N121 and R152. H176 serves as the catalytic Proton acceptor.

It belongs to the LDH/MDH superfamily. MDH type 3 family.

It catalyses the reaction (S)-malate + NAD(+) = oxaloacetate + NADH + H(+). Its function is as follows. Catalyzes the reversible oxidation of malate to oxaloacetate. The chain is Malate dehydrogenase from Methylobacterium radiotolerans (strain ATCC 27329 / DSM 1819 / JCM 2831 / NBRC 15690 / NCIMB 10815 / 0-1).